The primary structure comprises 329 residues: Ribosomal protein L11 methyltransferase (329 aa).

S-adenosyl-L-methionine is bound by residues T177, G198, D220, and N264.

This sequence belongs to the methyltransferase superfamily. PrmA family.

It localises to the cytoplasm. It carries out the reaction L-lysyl-[protein] + 3 S-adenosyl-L-methionine = N(6),N(6),N(6)-trimethyl-L-lysyl-[protein] + 3 S-adenosyl-L-homocysteine + 3 H(+). In terms of biological role, methylates ribosomal protein L11. The protein is Ribosomal protein L11 methyltransferase of Helicobacter pylori (strain J99 / ATCC 700824) (Campylobacter pylori J99).